A 202-amino-acid chain; its full sequence is MLKEILSSALLMLIMIDPSDKILLVSLLREDFHIEDVKSLIIRANLIGFILLLLFAVAGKIILQDIFHIELDALRVAGGFVLFKIGLEALEGGGMVTIKREKNILALAAVPVATPLIAGPAAITAAITLTAEHGIIVSIVGTLIAIAITAALMMIALYLMRGISKTALSVTIRIIGLFIMAIGAQMMITGAGGIVLNLIKGA.

6 helical membrane-spanning segments follow: residues isoleucine 5–valine 25, isoleucine 47–phenylalanine 67, valine 76–valine 96, isoleucine 104–threonine 124, isoleucine 135–isoleucine 155, and isoleucine 174–isoleucine 194.

Belongs to the UPF0056 (MarC) family.

The protein resides in the cell membrane. The polypeptide is UPF0056 membrane protein PH0214 (Pyrococcus horikoshii (strain ATCC 700860 / DSM 12428 / JCM 9974 / NBRC 100139 / OT-3)).